Here is a 345-residue protein sequence, read N- to C-terminus: Dihydroorotase (345 aa).

2 residues coordinate Zn(2+): H13 and H15. Substrate is bound by residues 15 to 17 (HFR) and N41. Positions 98, 135, and 173 each coordinate Zn(2+). The residue at position 98 (K98) is an N6-carboxylysine. Residue H135 participates in substrate binding. L218 provides a ligand contact to substrate. D246 lines the Zn(2+) pocket. Residue D246 is part of the active site. Substrate is bound by residues H250 and A262.

The protein belongs to the metallo-dependent hydrolases superfamily. DHOase family. Class II DHOase subfamily. Homodimer. The cofactor is Zn(2+).

It carries out the reaction (S)-dihydroorotate + H2O = N-carbamoyl-L-aspartate + H(+). It participates in pyrimidine metabolism; UMP biosynthesis via de novo pathway; (S)-dihydroorotate from bicarbonate: step 3/3. In terms of biological role, catalyzes the reversible cyclization of carbamoyl aspartate to dihydroorotate. This chain is Dihydroorotase, found in Shewanella pealeana (strain ATCC 700345 / ANG-SQ1).